The primary structure comprises 329 residues: Acetyl-coenzyme A carboxylase carboxyl transferase subunit alpha (329 aa).

In terms of domain architecture, CoA carboxyltransferase C-terminal spans 40-294 (QLETLAARRR…KESLIRNLRE (255 aa)).

This sequence belongs to the AccA family. In terms of assembly, acetyl-CoA carboxylase is a heterohexamer composed of biotin carboxyl carrier protein (AccB), biotin carboxylase (AccC) and two subunits each of ACCase subunit alpha (AccA) and ACCase subunit beta (AccD).

Its subcellular location is the cytoplasm. The enzyme catalyses N(6)-carboxybiotinyl-L-lysyl-[protein] + acetyl-CoA = N(6)-biotinyl-L-lysyl-[protein] + malonyl-CoA. Its pathway is lipid metabolism; malonyl-CoA biosynthesis; malonyl-CoA from acetyl-CoA: step 1/1. Its function is as follows. Component of the acetyl coenzyme A carboxylase (ACC) complex. First, biotin carboxylase catalyzes the carboxylation of biotin on its carrier protein (BCCP) and then the CO(2) group is transferred by the carboxyltransferase to acetyl-CoA to form malonyl-CoA. This chain is Acetyl-coenzyme A carboxylase carboxyl transferase subunit alpha, found in Prochlorococcus marinus (strain MIT 9211).